The primary structure comprises 480 residues: Ammonium transporter 3 member 3 (480 aa).

11 helical membrane-spanning segments follow: residues 31–51 (SATL…GSIV), 59–79 (SAFM…VWAY), 135–155 (MVYF…GSLL), 169–189 (LWIT…GFLF), 198–218 (GGYV…YWVG), 233–253 (ILLV…FNGG), 265–287 (AVLN…DVFF), 292–314 (SVIG…AGLV), 318–337 (AAIV…MMVL), 361–381 (GFLG…SLFL), and 407–427 (LFVT…ISLI).

Belongs to the ammonia transporter channel (TC 1.A.11.2) family.

The protein resides in the membrane. Functionally, involved in ammonium transport. The protein is Ammonium transporter 3 member 3 (AMT3-3) of Oryza sativa subsp. japonica (Rice).